We begin with the raw amino-acid sequence, 250 residues long: Probable transcriptional regulatory protein tll0175 (250 aa).

It belongs to the TACO1 family.

It localises to the cytoplasm. This chain is Probable transcriptional regulatory protein tll0175, found in Thermosynechococcus vestitus (strain NIES-2133 / IAM M-273 / BP-1).